Here is a 389-residue protein sequence, read N- to C-terminus: Indole-3-acetate monooxygenase (389 aa).

It belongs to the HpaH/HsaA monooxygenase family.

The catalysed reaction is (indol-3-yl)acetate + NADH + O2 + H(+) = 2-hydroxy-(1H-indol-3-yl)acetate + NAD(+) + H2O. It carries out the reaction indole + NADH + O2 + H(+) = indoxyl + NAD(+) + H2O. Involved in the degradation of the plant hormone indole-3-acetic acid (IAA). Catalyzes the first step of the pathway, the conversion of IAA to 2-hydroxy-IAA (2-OH-IAA). Can also convert indole to indoxyl, which spontaneously dimerizes in the presence of oxygen to form the blue pigment indigo. This Pseudomonas putida (Arthrobacter siderocapsulatus) protein is Indole-3-acetate monooxygenase.